A 373-amino-acid chain; its full sequence is UDP-N-acetylglucosamine--N-acetylmuramyl-(pentapeptide) pyrophosphoryl-undecaprenol N-acetylglucosamine transferase (373 aa).

Residues 14-16 (TAG), N128, R165, S199, and Q295 contribute to the UDP-N-acetyl-alpha-D-glucosamine site.

It belongs to the glycosyltransferase 28 family. MurG subfamily.

The protein resides in the cell membrane. It carries out the reaction di-trans,octa-cis-undecaprenyl diphospho-N-acetyl-alpha-D-muramoyl-L-alanyl-D-glutamyl-meso-2,6-diaminopimeloyl-D-alanyl-D-alanine + UDP-N-acetyl-alpha-D-glucosamine = di-trans,octa-cis-undecaprenyl diphospho-[N-acetyl-alpha-D-glucosaminyl-(1-&gt;4)]-N-acetyl-alpha-D-muramoyl-L-alanyl-D-glutamyl-meso-2,6-diaminopimeloyl-D-alanyl-D-alanine + UDP + H(+). It participates in cell wall biogenesis; peptidoglycan biosynthesis. Functionally, cell wall formation. Catalyzes the transfer of a GlcNAc subunit on undecaprenyl-pyrophosphoryl-MurNAc-pentapeptide (lipid intermediate I) to form undecaprenyl-pyrophosphoryl-MurNAc-(pentapeptide)GlcNAc (lipid intermediate II). The polypeptide is UDP-N-acetylglucosamine--N-acetylmuramyl-(pentapeptide) pyrophosphoryl-undecaprenol N-acetylglucosamine transferase (Mycobacterium sp. (strain JLS)).